Reading from the N-terminus, the 537-residue chain is Fucosyltransferase 6 (537 aa).

Topologically, residues 1–20 (MYHIFQISSEVFRAFGLKMK) are cytoplasmic. Residues 21–41 (ILLTLVFSGLLIWSVVLVSFS) form a helical; Signal-anchor for type II membrane protein membrane-spanning segment. At 42–537 (NDFNNQLLVA…NDGLKLFDEL (496 aa)) the chain is on the lumenal side. Asn54, Asn231, and Asn378 each carry an N-linked (GlcNAc...) asparagine glycan.

Belongs to the glycosyltransferase 37 family. In terms of tissue distribution, expressed in roots and flowers.

The protein localises to the golgi apparatus. It localises to the golgi stack membrane. Its pathway is protein modification; protein glycosylation. Functionally, may be involved in cell wall biosynthesis. May act as a fucosyltransferase. The polypeptide is Fucosyltransferase 6 (FUT6) (Arabidopsis thaliana (Mouse-ear cress)).